Here is a 319-residue protein sequence, read N- to C-terminus: Acetyl-coenzyme A carboxylase carboxyl transferase subunit alpha (319 aa).

Positions 35 to 292 constitute a CoA carboxyltransferase C-terminal domain; that stretch reads EISKLMRRLV…KKTIAEALAE (258 aa).

The protein belongs to the AccA family. Acetyl-CoA carboxylase is a heterohexamer composed of biotin carboxyl carrier protein (AccB), biotin carboxylase (AccC) and two subunits each of ACCase subunit alpha (AccA) and ACCase subunit beta (AccD).

The protein resides in the cytoplasm. The catalysed reaction is N(6)-carboxybiotinyl-L-lysyl-[protein] + acetyl-CoA = N(6)-biotinyl-L-lysyl-[protein] + malonyl-CoA. It functions in the pathway lipid metabolism; malonyl-CoA biosynthesis; malonyl-CoA from acetyl-CoA: step 1/1. Component of the acetyl coenzyme A carboxylase (ACC) complex. First, biotin carboxylase catalyzes the carboxylation of biotin on its carrier protein (BCCP) and then the CO(2) group is transferred by the carboxyltransferase to acetyl-CoA to form malonyl-CoA. In Desulfitobacterium hafniense (strain DSM 10664 / DCB-2), this protein is Acetyl-coenzyme A carboxylase carboxyl transferase subunit alpha.